A 434-amino-acid polypeptide reads, in one-letter code: Serine/threonine transporter SstT (434 aa).

Helical transmembrane passes span 14-34, 41-61, 72-92, 135-155, 172-192, 210-230, 282-302, 316-336, and 351-371; these read IVIG…WSFI, FVGA…MSAI, FGTV…AAVA, ALVE…GSGL, TVSA…VGLL, LLML…PFMV, ISIP…VSIM, IFLA…VSGI, and FGIS…IGVV. Positions 413–434 are disordered; sequence GKGTAEVVTPEKTNEAEESEQV.

It belongs to the dicarboxylate/amino acid:cation symporter (DAACS) (TC 2.A.23) family.

The protein resides in the cell membrane. The enzyme catalyses L-serine(in) + Na(+)(in) = L-serine(out) + Na(+)(out). The catalysed reaction is L-threonine(in) + Na(+)(in) = L-threonine(out) + Na(+)(out). Its function is as follows. Involved in the import of serine and threonine into the cell, with the concomitant import of sodium (symport system). The polypeptide is Serine/threonine transporter SstT (Lacticaseibacillus casei (strain BL23) (Lactobacillus casei)).